The chain runs to 348 residues: Glycerol-1-phosphate dehydrogenase [NAD(P)+] (348 aa).

NAD(+) contacts are provided by residues 94–98 (GKVID) and 116–119 (TTAS). Position 121 (aspartate 121) interacts with substrate. An NAD(+)-binding site is contributed by serine 125. Aspartate 168 provides a ligand contact to substrate. Residues aspartate 168 and histidine 248 each contribute to the Zn(2+) site. Histidine 252 contacts substrate. Histidine 264 contributes to the Zn(2+) binding site.

This sequence belongs to the glycerol-1-phosphate dehydrogenase family. In terms of assembly, homooctamer. Requires Zn(2+) as cofactor.

The protein resides in the cytoplasm. The enzyme catalyses sn-glycerol 1-phosphate + NAD(+) = dihydroxyacetone phosphate + NADH + H(+). It carries out the reaction sn-glycerol 1-phosphate + NADP(+) = dihydroxyacetone phosphate + NADPH + H(+). Its pathway is membrane lipid metabolism; glycerophospholipid metabolism. Functionally, catalyzes the NAD(P)H-dependent reduction of dihydroxyacetonephosphate (DHAP or glycerone phosphate) to glycerol 1-phosphate (G1P). The G1P thus generated is used as the glycerophosphate backbone of phospholipids in the cellular membranes of Archaea. The polypeptide is Glycerol-1-phosphate dehydrogenase [NAD(P)+] (Methanobrevibacter smithii (strain ATCC 35061 / DSM 861 / OCM 144 / PS)).